The following is a 178-amino-acid chain: Cytochrome b6-f complex iron-sulfur subunit 3 (178 aa).

A helical transmembrane segment spans residues 20–42 (FITGATVAVTAGAALYPAGKFLI). The Rieske domain occupies 65 to 161 (PASQILAEPP…VAVIDNSILI (97 aa)). [2Fe-2S] cluster is bound by residues cysteine 107, histidine 109, cysteine 125, and histidine 128. Cysteines 112 and 127 form a disulfide.

Belongs to the Rieske iron-sulfur protein family. The 4 large subunits of the cytochrome b6-f complex are cytochrome b6, subunit IV (17 kDa polypeptide, PetD), cytochrome f and the Rieske protein, while the 4 small subunits are PetG, PetL, PetM and PetN. The complex functions as a dimer. Requires [2Fe-2S] cluster as cofactor.

It localises to the cellular thylakoid membrane. It catalyses the reaction 2 oxidized [plastocyanin] + a plastoquinol + 2 H(+)(in) = 2 reduced [plastocyanin] + a plastoquinone + 4 H(+)(out). Component of the cytochrome b6-f complex, which mediates electron transfer between photosystem II (PSII) and photosystem I (PSI), cyclic electron flow around PSI, and state transitions. In Nostoc sp. (strain PCC 7120 / SAG 25.82 / UTEX 2576), this protein is Cytochrome b6-f complex iron-sulfur subunit 3.